The chain runs to 204 residues: Holliday junction branch migration complex subunit RuvA (204 aa).

Positions 1-64 (MIGRLQGILL…EDAHLLFGFA (64 aa)) are domain I. The tract at residues 65 to 143 (QKTDRTLFRE…GVKQSDFFVE (79 aa)) is domain II. Residues 144–155 (STHIPLSPSIES) are flexible linker. Positions 156-204 (HSESSSDEAISALIALGYKPVEAEKMVKRVAKPELTSEQVIREALKVAL) are domain III.

The protein belongs to the RuvA family. Homotetramer. Forms an RuvA(8)-RuvB(12)-Holliday junction (HJ) complex. HJ DNA is sandwiched between 2 RuvA tetramers; dsDNA enters through RuvA and exits via RuvB. An RuvB hexamer assembles on each DNA strand where it exits the tetramer. Each RuvB hexamer is contacted by two RuvA subunits (via domain III) on 2 adjacent RuvB subunits; this complex drives branch migration. In the full resolvosome a probable DNA-RuvA(4)-RuvB(12)-RuvC(2) complex forms which resolves the HJ.

Its subcellular location is the cytoplasm. Functionally, the RuvA-RuvB-RuvC complex processes Holliday junction (HJ) DNA during genetic recombination and DNA repair, while the RuvA-RuvB complex plays an important role in the rescue of blocked DNA replication forks via replication fork reversal (RFR). RuvA specifically binds to HJ cruciform DNA, conferring on it an open structure. The RuvB hexamer acts as an ATP-dependent pump, pulling dsDNA into and through the RuvAB complex. HJ branch migration allows RuvC to scan DNA until it finds its consensus sequence, where it cleaves and resolves the cruciform DNA. The sequence is that of Holliday junction branch migration complex subunit RuvA from Haemophilus influenzae (strain ATCC 51907 / DSM 11121 / KW20 / Rd).